Here is a 492-residue protein sequence, read N- to C-terminus: 2,3-bisphosphoglycerate-independent phosphoglycerate mutase (492 aa).

Mn(2+) is bound by residues Asp-11 and Ser-61. Ser-61 (phosphoserine intermediate) is an active-site residue. Substrate contacts are provided by residues His-118, 147-148, Arg-178, Arg-184, 248-251, and Lys-320; these read RD and RNDR. Residues Asp-386, His-390, Asp-427, His-428, and His-445 each coordinate Mn(2+).

This sequence belongs to the BPG-independent phosphoglycerate mutase family. Monomer. The cofactor is Mn(2+).

It carries out the reaction (2R)-2-phosphoglycerate = (2R)-3-phosphoglycerate. It functions in the pathway carbohydrate degradation; glycolysis; pyruvate from D-glyceraldehyde 3-phosphate: step 3/5. Functionally, catalyzes the interconversion of 2-phosphoglycerate and 3-phosphoglycerate. The chain is 2,3-bisphosphoglycerate-independent phosphoglycerate mutase from Campylobacter jejuni (strain RM1221).